The chain runs to 372 residues: Adaptive-response sensory-kinase SasA (372 aa).

In terms of domain architecture, Histidine kinase spans 147–360 (MVAHELRTPL…CFHFTVPVWQ (214 aa)). A Phosphohistidine; by autocatalysis modification is found at His-150.

As to quaternary structure, homooligomerizes. Interacts with KaiC. Participates in the KaiBC complex, whose core is composed of a KaiC homohexamer and 6 KaiB.

It carries out the reaction ATP + protein L-histidine = ADP + protein N-phospho-L-histidine.. Its function is as follows. Member of the two-component regulatory system SasA/RpaA involved in genome-wide circadian gene expression. One of several clock output pathways. Participates in the Kai clock protein complex, the main circadian regulator in cyanobacteria, via its interaction with KaiC. KaiC enhances the autophosphorylation activity of SasA, which then transfers its phosphate group to RpaA to activate it. In addition to its output function, recruits fold-shifted KaiB (KaiB(fs)) to KaiC to cooperatively form the KaiB(6):KaiC(6) complex (independent of SasA kinase activity). Required for robustness of the circadian rhythm of gene expression and is involved in clock output, also required for adaptation to light/dark cycles. The chain is Adaptive-response sensory-kinase SasA from Prochlorococcus marinus subsp. pastoris (strain CCMP1986 / NIES-2087 / MED4).